The sequence spans 110 residues: MTRMPKVQVCYALPERQTLVAVDVPAGASVRDAIAASGVLALHPDIDASALKTGIFGKLAPLDAPVADGDRVEIYRPLIVDPKLARQRRVDKTRREGSIEGRKWLPKDSR.

The segment at 90 to 110 is disordered; sequence VDKTRREGSIEGRKWLPKDSR.

The protein belongs to the UPF0125 (RnfH) family.

This is Protein RnfH from Burkholderia mallei (strain NCTC 10229).